The following is a 440-amino-acid chain: Protein ABHD8 (440 aa).

The segment at 123 to 158 is disordered; it reads DPAGSDGRSAPGSGSGSGSGSGSGGRRRRARRPKRT. The segment covering 124 to 134 has biased composition (low complexity); it reads PAGSDGRSAPG. Positions 135-146 are enriched in gly residues; it reads SGSGSGSGSGSG. A compositionally biased stretch (basic residues) spans 147–158; sequence GRRRRARRPKRT. An AB hydrolase-1 domain is found at 178–280; the sequence is VLFFIHGVGG…HKVIMINGGG (103 aa). Active-site charge relay system residues include Ser-253, Asp-371, and His-399.

Belongs to the AB hydrolase superfamily. As to quaternary structure, interacts with NLRP3 (via NACHT and LLR domains); this interaction is enhanced in the presence of NLRP3 inflammasome inducers, such as ATP, nigericin, silica, or alum. Interacts with ZDHHC12.

Its subcellular location is the cytoplasm. Its function is as follows. Negatively regulates NLRP3-driven inflammation. Promotes NLRP3 degradation through the chaperone-mediated autophagy (CMA) pathway, hence attenuating inflammasome activation and IL1B secretion. Acts by recruiting palmitoyltransferase ZDHHC12 to NLRP3, facilitating NLRP3 palmitoylation and subsequent degradation. The chain is Protein ABHD8 from Macaca fascicularis (Crab-eating macaque).